A 302-amino-acid polypeptide reads, in one-letter code: Negative regulator of the PHO system (302 aa).

In terms of domain architecture, Protein kinase spans 6–296 (FKQLEKLGNG…AKQALLHPWF (291 aa)). ATP contacts are provided by residues 12–20 (LGNGTYATV) and K35. The active-site Proton acceptor is the D132.

This sequence belongs to the protein kinase superfamily. CMGC Ser/Thr protein kinase family. CDC2/CDKX subfamily. In terms of assembly, interacts with a number of cyclins.

It carries out the reaction L-seryl-[protein] + ATP = O-phospho-L-seryl-[protein] + ADP + H(+). The enzyme catalyses L-threonyl-[protein] + ATP = O-phospho-L-threonyl-[protein] + ADP + H(+). In terms of biological role, when phosphate concentrations are high it phosphorylates the PHO4 transcription factor thus establishing repression. The sequence is that of Negative regulator of the PHO system (PHO85) from Candida glabrata (strain ATCC 2001 / BCRC 20586 / JCM 3761 / NBRC 0622 / NRRL Y-65 / CBS 138) (Yeast).